The following is a 462-amino-acid chain: Bifunctional protein GlmU (462 aa).

A pyrophosphorylase region spans residues 1-230 (MVNKNAIILA…FEESMGVNDR (230 aa)). UDP-N-acetyl-alpha-D-glucosamine-binding positions include 9-12 (LAAG), K23, Q73, 78-79 (GT), 101-103 (SGD), G140, E155, N170, and N228. D103 provides a ligand contact to Mg(2+). N228 is a binding site for Mg(2+). The tract at residues 231-251 (VALSQATKVMRQRINTAHMRN) is linker. The tract at residues 252 to 462 (GVTLIDPEST…LPVAKDEEWQ (211 aa)) is N-acetyltransferase. R333 and K351 together coordinate UDP-N-acetyl-alpha-D-glucosamine. H363 (proton acceptor) is an active-site residue. Positions 366 and 377 each coordinate UDP-N-acetyl-alpha-D-glucosamine. Residues 386-387 (NY), S405, A423, and R440 each bind acetyl-CoA.

It in the N-terminal section; belongs to the N-acetylglucosamine-1-phosphate uridyltransferase family. The protein in the C-terminal section; belongs to the transferase hexapeptide repeat family. Homotrimer. The cofactor is Mg(2+).

Its subcellular location is the cytoplasm. It catalyses the reaction alpha-D-glucosamine 1-phosphate + acetyl-CoA = N-acetyl-alpha-D-glucosamine 1-phosphate + CoA + H(+). It carries out the reaction N-acetyl-alpha-D-glucosamine 1-phosphate + UTP + H(+) = UDP-N-acetyl-alpha-D-glucosamine + diphosphate. Its pathway is nucleotide-sugar biosynthesis; UDP-N-acetyl-alpha-D-glucosamine biosynthesis; N-acetyl-alpha-D-glucosamine 1-phosphate from alpha-D-glucosamine 6-phosphate (route II): step 2/2. It functions in the pathway nucleotide-sugar biosynthesis; UDP-N-acetyl-alpha-D-glucosamine biosynthesis; UDP-N-acetyl-alpha-D-glucosamine from N-acetyl-alpha-D-glucosamine 1-phosphate: step 1/1. The protein operates within bacterial outer membrane biogenesis; LPS lipid A biosynthesis. Catalyzes the last two sequential reactions in the de novo biosynthetic pathway for UDP-N-acetylglucosamine (UDP-GlcNAc). The C-terminal domain catalyzes the transfer of acetyl group from acetyl coenzyme A to glucosamine-1-phosphate (GlcN-1-P) to produce N-acetylglucosamine-1-phosphate (GlcNAc-1-P), which is converted into UDP-GlcNAc by the transfer of uridine 5-monophosphate (from uridine 5-triphosphate), a reaction catalyzed by the N-terminal domain. The chain is Bifunctional protein GlmU from Latilactobacillus sakei subsp. sakei (strain 23K) (Lactobacillus sakei subsp. sakei).